Here is a 335-residue protein sequence, read N- to C-terminus: Glyceraldehyde-3-phosphate dehydrogenase (335 aa).

Residues 11–12 (RI), Asp-33, and Lys-78 contribute to the NAD(+) site. Residues 148–150 (SST), Thr-179, 208–209 (TG), and Arg-231 each bind D-glyceraldehyde 3-phosphate. NAD(+) is bound at residue Asn-313.

This sequence belongs to the glyceraldehyde-3-phosphate dehydrogenase family. As to quaternary structure, homotetramer.

It is found in the cytoplasm. It catalyses the reaction D-glyceraldehyde 3-phosphate + phosphate + NAD(+) = (2R)-3-phospho-glyceroyl phosphate + NADH + H(+). It functions in the pathway carbohydrate degradation; glycolysis; pyruvate from D-glyceraldehyde 3-phosphate: step 1/5. The sequence is that of Glyceraldehyde-3-phosphate dehydrogenase (GPD) from Pleurotus sajor-caju (Oyster mushroom).